A 262-amino-acid chain; its full sequence is Small ribosomal subunit protein uS2 (262 aa).

Positions 240–262 are disordered; sequence NLDEKEESQEAESTEENTTVESN. A compositionally biased stretch (acidic residues) spans 243-254; sequence EKEESQEAESTE.

The protein belongs to the universal ribosomal protein uS2 family.

This chain is Small ribosomal subunit protein uS2, found in Staphylococcus haemolyticus (strain JCSC1435).